Here is a 113-residue protein sequence, read N- to C-terminus: ATP-dependent Clp protease adapter protein ClpS (113 aa).

The interval 1 to 26 (MLMQPLMMSDNPDDESDLGLLTKTRP) is disordered.

This sequence belongs to the ClpS family. As to quaternary structure, binds to the N-terminal domain of the chaperone ClpA.

In terms of biological role, involved in the modulation of the specificity of the ClpAP-mediated ATP-dependent protein degradation. The polypeptide is ATP-dependent Clp protease adapter protein ClpS (Ruegeria sp. (strain TM1040) (Silicibacter sp.)).